Here is a 208-residue protein sequence, read N- to C-terminus: Outer-membrane lipoprotein carrier protein (208 aa).

The signal sequence occupies residues 1–22 (MRKTLSILAISLPLLVSGYAQA).

Belongs to the LolA family. In terms of assembly, monomer.

The protein resides in the periplasm. In terms of biological role, participates in the translocation of lipoproteins from the inner membrane to the outer membrane. Only forms a complex with a lipoprotein if the residue after the N-terminal Cys is not an aspartate (The Asp acts as a targeting signal to indicate that the lipoprotein should stay in the inner membrane). This is Outer-membrane lipoprotein carrier protein from Shewanella sediminis (strain HAW-EB3).